The chain runs to 553 residues: Sensitive to high expression protein 9 homolog, mitochondrial (553 aa).

A disordered region spans residues 61–174 (FFSTQPPKDT…TAQPELPSRT (114 aa)). The span at 62–84 (FSTQPPKDTPENMNNKETGSSNV) shows a compositional bias: polar residues. Basic and acidic residues predominate over residues 103–116 (AKEDTTDATNKSET). Positions 133–160 (SDVSSASTSDSANSSETTTTTSETTPEN) are enriched in low complexity. 2 coiled-coil regions span residues 210–241 (SAIE…HNYK) and 277–309 (RLDH…DLNA). The helical transmembrane segment at 331 to 351 (WGTWGLMGVNVLLFLVLQFVA) threads the bilayer. Topologically, residues 352 to 523 (EPWRRKRLMK…RIDLKMRDVS (172 aa)) are mitochondrial intermembrane. Disordered regions lie at residues 408 to 428 (ALAS…RTEG) and 443 to 497 (AEEA…QTLS). Composition is skewed to low complexity over residues 443 to 473 (AEEA…QTPE) and 484 to 495 (TWKQTAQKWQQT). The chain crosses the membrane as a helical span at residues 524–544 (LLALESAATGAAVVASVAFFV). At 545 to 553 (LRSSGSGKA) the chain is on the mitochondrial matrix side.

The protein belongs to the SHE9 family. In terms of assembly, homooligomer.

The protein localises to the mitochondrion inner membrane. Functionally, required for the maintenance of the structure of the mitochondrial inner membrane. Involved in mitochondrial morphology. Causes growth arrest when highly overexpressed. The sequence is that of Sensitive to high expression protein 9 homolog, mitochondrial (she-9) from Neurospora crassa (strain ATCC 24698 / 74-OR23-1A / CBS 708.71 / DSM 1257 / FGSC 987).